The chain runs to 569 residues: Probable diguanylate cyclase DgcQ (569 aa).

2 helical membrane-spanning segments follow: residues 25–45 (LGPG…STLL) and 365–385 (IALT…WYVI). The 136-residue stretch at 433 to 568 (HPFSVIQVDL…GRNRVCASDN (136 aa)) folds into the GGDEF domain. Mg(2+) is bound at residue Asp-441. 3 residues coordinate substrate: Asn-449, His-454, and Asp-458. A Mg(2+)-binding site is contributed by Glu-484. Glu-484 serves as the catalytic Proton acceptor.

In terms of assembly, homodimer. The cofactor is Mg(2+).

It localises to the cell inner membrane. It carries out the reaction 2 GTP = 3',3'-c-di-GMP + 2 diphosphate. It functions in the pathway glycan metabolism; bacterial cellulose biosynthesis. The protein operates within purine metabolism; 3',5'-cyclic di-GMP biosynthesis. Catalyzes the synthesis of cyclic-di-GMP (c-di-GMP) via the condensation of 2 GTP molecules. Cyclic-di-GMP is a second messenger which controls cell surface-associated traits in bacteria. Involved in the regulation of cellulose production. The chain is Probable diguanylate cyclase DgcQ from Shigella sonnei (strain Ss046).